Here is a 129-residue protein sequence, read N- to C-terminus: Glycine cleavage system H protein (129 aa).

The Lipoyl-binding domain maps to 24-106 (TYTVGITEHA…YTDGWIFKIK (83 aa)). Lys65 bears the N6-lipoyllysine mark.

This sequence belongs to the GcvH family. The glycine cleavage system is composed of four proteins: P, T, L and H. Requires (R)-lipoate as cofactor.

Functionally, the glycine cleavage system catalyzes the degradation of glycine. The H protein shuttles the methylamine group of glycine from the P protein to the T protein. This Klebsiella pneumoniae subsp. pneumoniae (strain ATCC 700721 / MGH 78578) protein is Glycine cleavage system H protein.